We begin with the raw amino-acid sequence, 438 residues long: Adenylosuccinate synthetase (438 aa).

Residues 13 to 19 and 41 to 43 contribute to the GTP site; these read GDEGKGK and GHT. Catalysis depends on D14, which acts as the Proton acceptor. The Mg(2+) site is built by D14 and G41. IMP contacts are provided by residues 14–17, 39–42, T136, R150, Q231, T246, and R310; these read DEGK and NAGH. The active-site Proton donor is the H42. Position 306–312 (306–312) interacts with substrate; sequence STTGRRR. GTP-binding positions include R312, 338–340, and 421–423; these read KID and STG.

Belongs to the adenylosuccinate synthetase family. As to quaternary structure, homodimer. It depends on Mg(2+) as a cofactor.

The protein resides in the cytoplasm. The catalysed reaction is IMP + L-aspartate + GTP = N(6)-(1,2-dicarboxyethyl)-AMP + GDP + phosphate + 2 H(+). Its pathway is purine metabolism; AMP biosynthesis via de novo pathway; AMP from IMP: step 1/2. Functionally, plays an important role in the de novo pathway of purine nucleotide biosynthesis. Catalyzes the first committed step in the biosynthesis of AMP from IMP. This chain is Adenylosuccinate synthetase, found in Blochmanniella floridana.